The following is a 306-amino-acid chain: Glycine--tRNA ligase alpha subunit (306 aa).

Belongs to the class-II aminoacyl-tRNA synthetase family. Tetramer of two alpha and two beta subunits.

The protein resides in the cytoplasm. It carries out the reaction tRNA(Gly) + glycine + ATP = glycyl-tRNA(Gly) + AMP + diphosphate. In Aliivibrio fischeri (strain ATCC 700601 / ES114) (Vibrio fischeri), this protein is Glycine--tRNA ligase alpha subunit.